Consider the following 1109-residue polypeptide: Pesticidal crystal protein Cry28Aa (1109 aa).

It belongs to the delta endotoxin family.

Its function is as follows. Promotes colloidosmotic lysis by binding to the midgut epithelial cells of insects. The chain is Pesticidal crystal protein Cry28Aa (cry28Aa) from Bacillus thuringiensis subsp. finitimus.